Reading from the N-terminus, the 112-residue chain is Colipase (112 aa).

The first 17 residues, 1–17 (MKVLVVLLVTLVAVAYA), serve as a signal peptide directing secretion. A propeptide spans 18 to 22 (APGPR) (enterostatin, activation peptide). Intrachain disulfides connect Cys-34–Cys-45, Cys-40–Cys-56, Cys-44–Cys-78, Cys-66–Cys-86, and Cys-80–Cys-104.

The protein belongs to the colipase family. In terms of assembly, forms a 1:1 stoichiometric complex with pancreatic lipase. As to expression, expressed by the pancreas.

The protein localises to the secreted. Its function is as follows. Colipase is a cofactor of pancreatic lipase. It allows the lipase to anchor itself to the lipid-water interface. Without colipase the enzyme is washed off by bile salts, which have an inhibitory effect on the lipase. Enterostatin has a biological activity as a satiety signal. In Rattus norvegicus (Rat), this protein is Colipase.